A 142-amino-acid chain; its full sequence is 3-hydroxyacyl-[acyl-carrier-protein] dehydratase FabZ (142 aa).

His-41 is a catalytic residue.

It belongs to the thioester dehydratase family. FabZ subfamily.

The protein localises to the cytoplasm. The catalysed reaction is a (3R)-hydroxyacyl-[ACP] = a (2E)-enoyl-[ACP] + H2O. In terms of biological role, involved in unsaturated fatty acids biosynthesis. Catalyzes the dehydration of short chain beta-hydroxyacyl-ACPs and long chain saturated and unsaturated beta-hydroxyacyl-ACPs. The protein is 3-hydroxyacyl-[acyl-carrier-protein] dehydratase FabZ of Symbiobacterium thermophilum (strain DSM 24528 / JCM 14929 / IAM 14863 / T).